Consider the following 238-residue polypeptide: Purine nucleoside phosphorylase DeoD-type (238 aa).

Histidine 4 is a binding site for a purine D-ribonucleoside. Residues glycine 20, arginine 24, arginine 43, and 87 to 90 (RVGT) each bind phosphate. A purine D-ribonucleoside contacts are provided by residues 179-181 (EME) and 203-204 (SN).

The protein belongs to the PNP/UDP phosphorylase family. In terms of assembly, homohexamer; trimer of homodimers.

It carries out the reaction a purine D-ribonucleoside + phosphate = a purine nucleobase + alpha-D-ribose 1-phosphate. The catalysed reaction is a purine 2'-deoxy-D-ribonucleoside + phosphate = a purine nucleobase + 2-deoxy-alpha-D-ribose 1-phosphate. In terms of biological role, catalyzes the reversible phosphorolytic breakdown of the N-glycosidic bond in the beta-(deoxy)ribonucleoside molecules, with the formation of the corresponding free purine bases and pentose-1-phosphate. In Lacticaseibacillus casei (strain BL23) (Lactobacillus casei), this protein is Purine nucleoside phosphorylase DeoD-type.